We begin with the raw amino-acid sequence, 439 residues long: uncharacterized protein (439 aa).

28-35 contributes to the ATP binding site; that stretch reads GRRRIGKT.

This is an uncharacterized protein from Methanocaldococcus jannaschii (strain ATCC 43067 / DSM 2661 / JAL-1 / JCM 10045 / NBRC 100440) (Methanococcus jannaschii).